Here is a 184-residue protein sequence, read N- to C-terminus: Photosystem I assembly protein Ycf4 (184 aa).

The next 2 membrane-spanning stretches (helical) occupy residues F22–S42 and I57–S77.

Belongs to the Ycf4 family.

The protein resides in the plastid. The protein localises to the chloroplast thylakoid membrane. In terms of biological role, seems to be required for the assembly of the photosystem I complex. This is Photosystem I assembly protein Ycf4 from Draba nemorosa (Woodland whitlowgrass).